The chain runs to 989 residues: Atos homolog protein A (989 aa).

Residues 24–32 (TLLITEGRT) form a transactivation domain 1 (TAD1) region. 4 disordered regions span residues 244–295 (GEGG…LPPG), 393–477 (PDAL…KPAT), 525–639 (QNEQ…GLTQ), and 656–686 (EAEK…TPAN). Residues 254–270 (RSSLRLPRSPLFSRSLH) are compositionally biased toward low complexity. Over residues 397-412 (FTSQEPPGHKTTWNST) the composition is skewed to polar residues. 2 stretches are compositionally biased toward basic and acidic residues: residues 413 to 423 (QDKECLKKSKD) and 460 to 471 (TRLDRVDRESKT). 2 stretches are compositionally biased toward polar residues: residues 525–544 (QNEQ…VSLS) and 600–638 (TKSQ…NGLT). The span at 656–675 (EAEKHVRDGSTCLEKDENQE) shows a compositional bias: basic and acidic residues. Positions 676-686 (PHSSLSSTPAN) are enriched in polar residues. The segment at 792-849 (LLGNFEECVLNYRLEPLGTVEGFTAEVGASGTFCPSHMTLPVDVSFYSVSDDNAPSPY) is required for macropage invasion. Positions 876–884 (FNPNKTVVK) are transactivation domain 2 (TAD2).

Belongs to the ATOS family.

The protein resides in the nucleus. Functionally, transcription regulator that syncronizes transcriptional and translational programs to promote macrophage invasion of tissues. This chain is Atos homolog protein A (atosa), found in Danio rerio (Zebrafish).